A 173-amino-acid chain; its full sequence is Mesencephalic astrocyte-derived neurotrophic factor homolog (173 aa).

Residues 1–22 form the signal peptide; it reads MKTWHMVVVIGFLATLAQTSLA. Intrachain disulfides connect cysteine 28–cysteine 114, cysteine 31–cysteine 103, cysteine 61–cysteine 72, and cysteine 148–cysteine 151.

It belongs to the ARMET family.

The protein resides in the secreted. Required during the maturation of the embryonic nervous system for maintenance of neuronal and cuticular connectivity. Essential for maintenance of dopaminergic neurons and dopamine levels. The chain is Mesencephalic astrocyte-derived neurotrophic factor homolog from Drosophila sechellia (Fruit fly).